The following is a 351-amino-acid chain: UDP-3-O-acylglucosamine N-acyltransferase (351 aa).

The active-site Proton acceptor is His240.

This sequence belongs to the transferase hexapeptide repeat family. LpxD subfamily. As to quaternary structure, homotrimer.

It catalyses the reaction a UDP-3-O-[(3R)-3-hydroxyacyl]-alpha-D-glucosamine + a (3R)-hydroxyacyl-[ACP] = a UDP-2-N,3-O-bis[(3R)-3-hydroxyacyl]-alpha-D-glucosamine + holo-[ACP] + H(+). The protein operates within bacterial outer membrane biogenesis; LPS lipid A biosynthesis. Catalyzes the N-acylation of UDP-3-O-acylglucosamine using 3-hydroxyacyl-ACP as the acyl donor. Is involved in the biosynthesis of lipid A, a phosphorylated glycolipid that anchors the lipopolysaccharide to the outer membrane of the cell. In Pseudomonas fluorescens (strain SBW25), this protein is UDP-3-O-acylglucosamine N-acyltransferase.